Here is a 285-residue protein sequence, read N- to C-terminus: Bifunctional protein FolD (285 aa).

NADP(+) is bound by residues 165–167 (GRS) and Ser-190.

This sequence belongs to the tetrahydrofolate dehydrogenase/cyclohydrolase family. In terms of assembly, homodimer.

It carries out the reaction (6R)-5,10-methylene-5,6,7,8-tetrahydrofolate + NADP(+) = (6R)-5,10-methenyltetrahydrofolate + NADPH. The catalysed reaction is (6R)-5,10-methenyltetrahydrofolate + H2O = (6R)-10-formyltetrahydrofolate + H(+). It functions in the pathway one-carbon metabolism; tetrahydrofolate interconversion. Functionally, catalyzes the oxidation of 5,10-methylenetetrahydrofolate to 5,10-methenyltetrahydrofolate and then the hydrolysis of 5,10-methenyltetrahydrofolate to 10-formyltetrahydrofolate. This chain is Bifunctional protein FolD, found in Burkholderia multivorans (strain ATCC 17616 / 249).